The primary structure comprises 188 residues: Peptidyl-tRNA hydrolase (188 aa).

Tyrosine 14 serves as a coordination point for tRNA. The active-site Proton acceptor is the histidine 19. TRNA contacts are provided by tyrosine 64, asparagine 66, and asparagine 112.

It belongs to the PTH family. Monomer.

The protein localises to the cytoplasm. The catalysed reaction is an N-acyl-L-alpha-aminoacyl-tRNA + H2O = an N-acyl-L-amino acid + a tRNA + H(+). Hydrolyzes ribosome-free peptidyl-tRNAs (with 1 or more amino acids incorporated), which drop off the ribosome during protein synthesis, or as a result of ribosome stalling. Its function is as follows. Catalyzes the release of premature peptidyl moieties from peptidyl-tRNA molecules trapped in stalled 50S ribosomal subunits, and thus maintains levels of free tRNAs and 50S ribosomes. This Bacillus velezensis (strain DSM 23117 / BGSC 10A6 / LMG 26770 / FZB42) (Bacillus amyloliquefaciens subsp. plantarum) protein is Peptidyl-tRNA hydrolase.